A 214-amino-acid polypeptide reads, in one-letter code: uncharacterized protein (214 aa).

Positions 1-18 (MTMYIGLILVVLATFCQG) are cleaved as a signal peptide. N-linked (GlcNAc...) asparagine; by host glycosylation is present at asparagine 64.

This is an uncharacterized protein from Magallana gigas (Pacific oyster).